The primary structure comprises 162 residues: Beta-carotene hydroxylase (162 aa).

Residues 8–135 (VATVLVMELT…GRDHCVSFGF (128 aa)) enclose the Fatty acid hydroxylase domain.

This sequence belongs to the sterol desaturase family.

The catalysed reaction is all-trans-beta-carotene + 4 reduced [2Fe-2S]-[ferredoxin] + 2 O2 + 4 H(+) = all-trans-zeaxanthin + 4 oxidized [2Fe-2S]-[ferredoxin] + 2 H2O. Its pathway is carotenoid biosynthesis; astaxanthin biosynthesis. Functionally, catalyzes the hydroxylation reaction from beta-carotene to zeaxanthin via beta-cryptoxanthin. In Paracoccus sp. (strain N81106 / MBIC 01143) (Agrobacterium aurantiacum), this protein is Beta-carotene hydroxylase (crtZ).